The sequence spans 660 residues: DNA mismatch repair protein MutL (660 aa).

This sequence belongs to the DNA mismatch repair MutL/HexB family.

Its function is as follows. This protein is involved in the repair of mismatches in DNA. It is required for dam-dependent methyl-directed DNA mismatch repair. May act as a 'molecular matchmaker', a protein that promotes the formation of a stable complex between two or more DNA-binding proteins in an ATP-dependent manner without itself being part of a final effector complex. The chain is DNA mismatch repair protein MutL from Streptococcus equi subsp. equi (strain 4047).